Consider the following 141-residue polypeptide: Large ribosomal subunit protein uL23A (141 aa).

Phosphoserine is present on residues Ser68 and Ser70.

This sequence belongs to the universal ribosomal protein uL23 family. As to quaternary structure, component of the large ribosomal subunit (LSU). Mature yeast ribosomes consist of a small (40S) and a large (60S) subunit. The 40S small subunit contains 1 molecule of ribosomal RNA (18S rRNA) and at least 33 different proteins. The large 60S subunit contains 3 rRNA molecules (25S, 5.8S and 5S rRNA) and at least 46 different proteins. uL23 is associated with the polypeptide exit tunnel.

It localises to the cytoplasm. Its function is as follows. This protein binds to a specific region on the 26S rRNA. In terms of biological role, component of the ribosome, a large ribonucleoprotein complex responsible for the synthesis of proteins in the cell. The small ribosomal subunit (SSU) binds messenger RNAs (mRNAs) and translates the encoded message by selecting cognate aminoacyl-transfer RNA (tRNA) molecules. The large subunit (LSU) contains the ribosomal catalytic site termed the peptidyl transferase center (PTC), which catalyzes the formation of peptide bonds, thereby polymerizing the amino acids delivered by tRNAs into a polypeptide chain. The nascent polypeptides leave the ribosome through a tunnel in the LSU and interact with protein factors that function in enzymatic processing, targeting, and the membrane insertion of nascent chains at the exit of the ribosomal tunnel. uL23 is a major component of the universal docking site for these factors at the polypeptide exit tunnel. This chain is Large ribosomal subunit protein uL23A (rpl2501), found in Schizosaccharomyces pombe (strain 972 / ATCC 24843) (Fission yeast).